The primary structure comprises 217 residues: Gas vesicle protein F2 (217 aa).

This sequence belongs to the gas vesicle GvpF/GvpL family. In terms of assembly, binds GvpA.

It localises to the gas vesicle. The protein resides in the cytoplasm. Functionally, a minor component of the gas vesicle, may be involved in preventing GvpA aggregation during gas vesicle nucleation. Gas vesicles are hollow, gas filled proteinaceous nanostructures found in several microbial planktonic microorganisms. They allow positioning of halobacteria at the optimal depth for growth in the poorly aerated, shallow brine pools of their habitat. In terms of biological role, expression of 2 c-vac DNA fragments containing 2 divergently transcribed regions (gvpE-gvpF-gvpG-gvpH-gvpI-gvpJ-gvpK-gvpL-gvpM and gvpA-gvpC-gvpN-gvpO) allows H.volcanii to produce gas vesicles. Note that gvpD is not necessary for gas vesicle formation. The chain is Gas vesicle protein F2 from Halobacterium salinarum (strain ATCC 700922 / JCM 11081 / NRC-1) (Halobacterium halobium).